Here is a 1033-residue protein sequence, read N- to C-terminus: Probable beta-glucosidase E (1033 aa).

The segment at 1–71 is disordered; sequence MAPPDSTHGG…RSGSYKLRPV (71 aa). Over 1-161 the chain is Cytoplasmic; that stretch reads MAPPDSTHGG…PVKYARIWWR (161 aa). Basic and acidic residues-rich tracts occupy residues 11–20 and 59–71; these read SFRDHLKTND and DLERSGSYKLRPV. Residues 162–182 traverse the membrane as a helical; Signal-anchor for type II membrane protein segment; sequence TLLAVVVTLVVVVWGFLSFAV. Over 183–1033 the chain is Extracellular; that stretch reads SHREEPTVWP…SRDLPLMGEY (851 aa). 3 N-linked (GlcNAc...) asparagine glycosylation sites follow: Asn224, Asn232, and Asn418. Asp446 is a catalytic residue. Residues Asn489, Asn528, Asn593, Asn909, Asn918, and Asn976 are each glycosylated (N-linked (GlcNAc...) asparagine).

This sequence belongs to the glycosyl hydrolase 3 family.

It is found in the cell membrane. The catalysed reaction is Hydrolysis of terminal, non-reducing beta-D-glucosyl residues with release of beta-D-glucose.. The protein operates within glycan metabolism; cellulose degradation. Its function is as follows. Beta-glucosidases are one of a number of cellulolytic enzymes involved in the degradation of cellulosic biomass. Catalyzes the last step releasing glucose from the inhibitory cellobiose. The protein is Probable beta-glucosidase E (bglE) of Aspergillus fumigatus (strain CBS 144.89 / FGSC A1163 / CEA10) (Neosartorya fumigata).